We begin with the raw amino-acid sequence, 156 residues long: MPLLLTGKKFHNDLNKNKCLAMFAPLEGGYETRLLRRMRAKGFKTYITSARGLGDPEVFLLKLHGIRPPHLGHQSIGRNGALGEVQQVIPQASELFNENDKDKLLWLLEGQVLSQSELESLIKICTSDNKLKIVVEMGGSRKLEWKSLNDYILNEF.

It belongs to the complex I NdhN subunit family. In terms of assembly, NDH-1 can be composed of about 15 different subunits; different subcomplexes with different compositions have been identified which probably have different functions.

The protein localises to the cellular thylakoid membrane. It carries out the reaction a plastoquinone + NADH + (n+1) H(+)(in) = a plastoquinol + NAD(+) + n H(+)(out). It catalyses the reaction a plastoquinone + NADPH + (n+1) H(+)(in) = a plastoquinol + NADP(+) + n H(+)(out). Its function is as follows. NDH-1 shuttles electrons from an unknown electron donor, via FMN and iron-sulfur (Fe-S) centers, to quinones in the respiratory and/or the photosynthetic chain. The immediate electron acceptor for the enzyme in this species is believed to be plastoquinone. Couples the redox reaction to proton translocation, and thus conserves the redox energy in a proton gradient. Cyanobacterial NDH-1 also plays a role in inorganic carbon-concentration. In Prochlorococcus marinus subsp. pastoris (strain CCMP1986 / NIES-2087 / MED4), this protein is NAD(P)H-quinone oxidoreductase subunit N.